The sequence spans 341 residues: Probable sulfurtransferase (341 aa).

Zn(2+) is bound by residues Cys-40, Cys-42, Cys-58, and Cys-61. Gly-88 contributes to the ATP binding site. The [4Fe-4S] cluster site is built by Cys-176 and Cys-179. ATP-binding residues include Arg-183 and Gly-202. Cys-267 lines the [4Fe-4S] cluster pocket. Zn(2+) contacts are provided by Cys-316, Cys-319, Cys-328, and Cys-331.

Belongs to the TtcA family. It depends on [4Fe-4S] cluster as a cofactor. Requires Mg(2+) as cofactor.

This is Probable sulfurtransferase from Methanocaldococcus jannaschii (strain ATCC 43067 / DSM 2661 / JAL-1 / JCM 10045 / NBRC 100440) (Methanococcus jannaschii).